The following is a 118-amino-acid chain: MHTLDSLDAESRRTDVPEFWPGDTLKVHVRVVEGNRQRIQVFQGVVIRRQGGGVRETFTVRKVSFGVGVERTFPLHSPIVSRVEVVTRGDVRRAKLYYLRQLRGKAAKIKEKREPVGR.

This sequence belongs to the bacterial ribosomal protein bL19 family.

Functionally, this protein is located at the 30S-50S ribosomal subunit interface and may play a role in the structure and function of the aminoacyl-tRNA binding site. The protein is Large ribosomal subunit protein bL19 of Parafrankia sp. (strain EAN1pec).